A 2346-amino-acid chain; its full sequence is Acetyl-CoA carboxylase 1 (2346 aa).

N-acetylmethionine is present on Met-1. 8 positions are modified to phosphoserine: Ser-5, Ser-23, Ser-25, Ser-29, Ser-34, Ser-48, Ser-50, and Ser-53. The residue at position 58 (Thr-58) is a Phosphothreonine. Ser-78 is subject to Phosphoserine. Ser-80 is modified (phosphoserine; by AMPK). One can recognise a Biotin carboxylation domain in the interval 117–618 (VIEKVLIANN…GTGWLDRLIA (502 aa)). The 192-residue stretch at 275 to 466 (SKRILNVPQE…LPAAQLQIAM (192 aa)) folds into the ATP-grasp domain. 315 to 320 (GGGGKG) is a binding site for ATP. Mg(2+) is bound by residues Glu-424, Glu-437, and Asn-439. The Mn(2+) site is built by Glu-424, Glu-437, and Asn-439. Residue Arg-441 is part of the active site. Thr-610 carries the post-translational modification Phosphothreonine. The Biotinyl-binding domain occupies 745 to 819 (FEKENDPSVL…DPGCVIAKMQ (75 aa)). Lys-786 is subject to N6-biotinyllysine. 4 positions are modified to phosphoserine: Ser-835, Ser-1201, Ser-1216, and Ser-1218. Phosphothreonine is present on Thr-1227. Residues Ser-1259, Ser-1263, and Ser-1273 each carry the phosphoserine modification. Lys-1334 bears the N6-acetyllysine mark. The CoA carboxyltransferase N-terminal domain occupies 1576-1914 (PYVTKDQLQS…SVYSSVPLLN (339 aa)). The carboxyltransferase stretch occupies residues 1576–2234 (PYVTKDQLQS…EDLVKKKIHN (659 aa)). Arg-1823, Lys-2127, and Arg-2129 together coordinate CoA. The region spanning 1918–2234 (PIDRVIEFVP…EDLVKKKIHN (317 aa)) is the CoA carboxyltransferase C-terminal domain. Thr-2153 carries the post-translational modification Phosphothreonine.

As to quaternary structure, monomer, homodimer, and homotetramer. Can form filamentous polymers. Interacts in its inactive phosphorylated form with the BRCT domains of BRCA1 which prevents ACACA dephosphorylation and inhibits lipid synthesis. Interacts with MID1IP1; interaction with MID1IP1 promotes oligomerization and increases its activity. Mg(2+) serves as cofactor. It depends on Mn(2+) as a cofactor. Biotin is required as a cofactor. Post-translationally, phosphorylation on Ser-1263 is required for interaction with BRCA1. Phosphorylation at Ser-80 by AMPK inactivates enzyme activity. In terms of processing, the biotin cofactor is covalently attached to the central biotinyl-binding domain and is required for the catalytic activity.

It is found in the cytoplasm. It localises to the cytosol. It catalyses the reaction hydrogencarbonate + acetyl-CoA + ATP = malonyl-CoA + ADP + phosphate + H(+). Its pathway is lipid metabolism; malonyl-CoA biosynthesis; malonyl-CoA from acetyl-CoA: step 1/1. Inhibited by phosphorylation. Citrate promotes oligomerization of the protein into filaments that correspond to the most active form of the carboxylase. Functionally, cytosolic enzyme that catalyzes the carboxylation of acetyl-CoA to malonyl-CoA, the first and rate-limiting step of de novo fatty acid biosynthesis. This is a 2 steps reaction starting with the ATP-dependent carboxylation of the biotin carried by the biotin carboxyl carrier (BCC) domain followed by the transfer of the carboxyl group from carboxylated biotin to acetyl-CoA. This is Acetyl-CoA carboxylase 1 from Bos taurus (Bovine).